The chain runs to 324 residues: Casein kinase I (324 aa).

One can recognise a Protein kinase domain in the interval Tyr9 to Ile278. ATP contacts are provided by residues Leu15–Ile23 and Lys38. The active-site Proton acceptor is Asp128.

This sequence belongs to the protein kinase superfamily. CK1 Ser/Thr protein kinase family. Casein kinase I subfamily. Interacts with rhoptry protein RON3; the interaction is direct. Interacts with CK2alpha; the interaction is direct. Interacts with nucleosome assembly protein NAPL. Interacts with RAB5b. Interacts with host GAPVD1. Interacts with host SNX22. It depends on Mg(2+) as a cofactor.

Its subcellular location is the cytoplasm. It is found in the cytoplasmic vesicle. The protein resides in the secretory vesicle. It localises to the microneme. The protein localises to the secreted. Its subcellular location is the host cell surface. It carries out the reaction L-seryl-[protein] + ATP = O-phospho-L-seryl-[protein] + ADP + H(+). The catalysed reaction is L-threonyl-[protein] + ATP = O-phospho-L-threonyl-[protein] + ADP + H(+). Serine/threonine-protein kinase likely to be involved in many cellular processes. Phosphorylates rhoptry protein RON3, nucleosome assembly protein NAPL and DNA/RNA-binding protein ALBA4 in vitro. The chain is Casein kinase I from Plasmodium falciparum (isolate Dd2).